A 732-amino-acid polypeptide reads, in one-letter code: Elongation factor 2 (732 aa).

The region spanning 19-228 is the tr-type G domain; sequence ELIRNIGIVA…TKITFKDIVE (210 aa). GTP-binding positions include 28-35, 94-98, and 148-151; these read AHIDHGKT, DTPGH, and NKID. Histidine 598 is modified (diphthamide).

It belongs to the TRAFAC class translation factor GTPase superfamily. Classic translation factor GTPase family. EF-G/EF-2 subfamily.

The protein localises to the cytoplasm. Functionally, catalyzes the GTP-dependent ribosomal translocation step during translation elongation. During this step, the ribosome changes from the pre-translocational (PRE) to the post-translocational (POST) state as the newly formed A-site-bound peptidyl-tRNA and P-site-bound deacylated tRNA move to the P and E sites, respectively. Catalyzes the coordinated movement of the two tRNA molecules, the mRNA and conformational changes in the ribosome. This is Elongation factor 2 (fusA) from Thermoplasma acidophilum (strain ATCC 25905 / DSM 1728 / JCM 9062 / NBRC 15155 / AMRC-C165).